The primary structure comprises 853 residues: MAEGNNKEEVIHLNNFPCHRGKEWMAVREGPITISDSSDEEGIPMLVTPATEQQEDDLDDDVILTEDDSEDEYGGFLDLESGKKEGEAKPGPSSKQTADDIVNPRLEQKVIILGENGLLFPESEPLEVQNQSSEDSETELLSNPGEPAASVDDQLIGEEYWLDHPYFQAPNPQPQERTNQVVPQERHSESEMGPMFFRHDFPEPAFPRPEPQQEGIPGPASPQPAHPLGELEDQQLAIDEDPGPAFPLSGPQEANLANMWEQEAAEVDQDLIPLLVKETEARFPDVASGYVEEIIHLKNYYDLNVLCNFLLENPDYPKREDRLIIHPSSSLLASQDDAKLPKIDFFDYSKLTPLDQRCFIQAADLLMADFKMLSSQDIKWALHELKGHYAITRKAFSDAIKKWQELSPETSGKRKKRKEMNQYSFIDFKFEQGNIKIEKRMFFLENKRRHCRYYDHQALLPAVKQEQEFYEQKIKEMAEHEDFLLALQMNEEQYQKDGQLIECRCCYGEFPFEELTQCADAHLFCKECLIRYAQEAVFGSGKSELSCMEGSCTCSFPTSELEKVLPQTILYKYYERKAEEEVAAAYADELVRCPSCSFPALLDSDVKRFSCPNPRCRKETCRKCQGLWKEHNGLTCEELAEKDDIKYRTSIEEKMTAARIRKCHKCGTGLIKSEGCNRMSCRCGAQMCYLCRVSINGYDHFCQHPRSPGAPCQECSRCSLWTDPTEDDEKLIEEIQKEAEEEQKRKNGENTFKRIGPPLEKPAEKVQRVEALPRPVPQNLHPQMPPYAFVHPPFPLPPVRPVFNNFPINMGPVPAPYVPPLPNVRVNYDFGHMHVPLEHNLPMHFGPQPRHRF.

Disordered stretches follow at residues 33 to 102 (TISD…DDIV), 125 to 152 (PLEV…ASVD), and 165 to 228 (PYFQ…AHPL). The segment covering 53–73 (QQEDDLDDDVILTEDDSEDEY) has biased composition (acidic residues). K89 participates in a covalent cross-link: Glycyl lysine isopeptide (Lys-Gly) (interchain with G-Cter in SUMO2). Glycyl lysine isopeptide (Lys-Gly) (interchain with G-Cter in SUMO2) cross-links involve residues K339 and K342. S407 is modified (phosphoserine). Glycyl lysine isopeptide (Lys-Gly) (interchain with G-Cter in SUMO2) cross-links involve residues K413, K418, K436, K447, and K473. Residues 463–479 (VKQEQEFYEQKIKEMAE) are a coiled coil. The tract at residues 499-716 (QLIECRCCYG…SPGAPCQECS (218 aa)) is TRIAD supradomain. 6 residues coordinate Zn(2+): C503, C506, C525, C528, C593, and C596. The RING-type 1 zinc finger occupies 503–552 (CRCCYGEFPFEELTQCADAHLFCKECLIRYAQEAVFGSGKSELSCMEGSC). The segment at 571–636 (YKYYERKAEE…LWKEHNGLTC (66 aa)) adopts an IBR-type zinc-finger fold. Residue K607 forms a Glycyl lysine isopeptide (Lys-Gly) (interchain with G-Cter in SUMO2) linkage. 6 residues coordinate Zn(2+): C611, C616, C621, C624, H631, and C636. Glycyl lysine isopeptide (Lys-Gly) (interchain with G-Cter in SUMO2) cross-links involve residues K646 and K654. Positions 663 and 666 each coordinate Zn(2+). An RING-type 2; atypical zinc finger spans residues 663–691 (CHKCGTGLIKSEGCNRMSCRCGAQMCYLC). C676 is a catalytic residue. 6 residues coordinate Zn(2+): C681, C683, C688, C691, H704, and C712. The stretch at 725–751 (TEDDEKLIEEIQKEAEEEQKRKNGENT) forms a coiled coil. Glycyl lysine isopeptide (Lys-Gly) (interchain with G-Cter in SUMO2) cross-links involve residues K753 and K761.

In terms of assembly, interacts with UBE2L3 and to some extent with UBE2L6. Interacts with TRAF3, TLR3, TLR4, TLR5 and TLR9. Isoform 3/ZIN binds RIPK1. In terms of processing, auto-ubiquitinated. Phosphorylation at Ser-719 enhances acceptor ubiquitin binding and chain-type specificity towards 'Lys-63' di-ubiquitin but not di-ubiquitin with other linkage types.

The protein resides in the cytoplasm. The protein localises to the cytoplasmic vesicle. Its subcellular location is the clathrin-coated vesicle. The enzyme catalyses S-ubiquitinyl-[E2 ubiquitin-conjugating enzyme]-L-cysteine + [acceptor protein]-L-lysine = [E2 ubiquitin-conjugating enzyme]-L-cysteine + N(6)-ubiquitinyl-[acceptor protein]-L-lysine.. Its pathway is protein modification; protein ubiquitination. Allosterically activated by 'Lys-63'-linked di-ubiquitin. Functionally, E3 ubiquitin ligase which accepts ubiquitin from specific E2 ubiquitin-conjugating enzymes, and then transfers it to substrates promoting their ubiquitination. Plays a role in the regulation of antiviral responses by promoting the degradation of TRAF3, TLR4 and TLR9. In turn, down-regulates NF-kappa-B and IRF3 activation as well as beta interferon production. Also participates in the regulation of autophagy by ubiquitinating BECN1 leading to its degradation and autophagy inhibition. Plays a role in ARC-dependent synaptic plasticity by mediating ARC ubiquitination resulting in its rapid proteasomal degradation. Plays aso an essential role in spermatogenesis and male fertility. Mechanistically, regulates meiosis by promoting the degradation of PRKACB through the ubiquitin-mediated lysosome pathway. Modulates the gonadotropin-releasing hormone signal pathway by affecting the stability of STAU2 that is required for the microtubule-dependent transport of neuronal RNA from the cell body to the dendrite. The protein is E3 ubiquitin-protein ligase RNF216 (Rnf216) of Mus musculus (Mouse).